We begin with the raw amino-acid sequence, 249 residues long: Probable hydroxyacylglutathione hydrolase ECU02_0580 (249 aa).

Zn(2+)-binding residues include His-75, His-77, Asp-79, His-80, His-126, Asp-144, and His-183. Substrate-binding positions include 183–185 and 240–243; these read HDY and RERK.

Belongs to the metallo-beta-lactamase superfamily. Glyoxalase II family. Zn(2+) serves as cofactor.

It localises to the cytoplasm. It is found in the nucleus. It carries out the reaction an S-(2-hydroxyacyl)glutathione + H2O = a 2-hydroxy carboxylate + glutathione + H(+). Its pathway is secondary metabolite metabolism; methylglyoxal degradation; (R)-lactate from methylglyoxal: step 2/2. In terms of biological role, thiolesterase that catalyzes the hydrolysis of S-D-lactoyl-glutathione to form glutathione and D-lactic acid. This Encephalitozoon cuniculi (strain GB-M1) (Microsporidian parasite) protein is Probable hydroxyacylglutathione hydrolase ECU02_0580.